We begin with the raw amino-acid sequence, 475 residues long: Aspartate ammonia-lyase (475 aa).

Positions 104, 143, 144, 145, 190, and 191 each coordinate L-aspartate. Residues Gly-320–Asn-329 form an SS loop region. The active-site Proton acceptor is Ser-321. Ser-322 and Lys-327 together coordinate L-aspartate.

This sequence belongs to the class-II fumarase/aspartase family. Aspartase subfamily. In terms of assembly, homotetramer.

The catalysed reaction is L-aspartate = fumarate + NH4(+). In terms of biological role, catalyzes the reversible conversion of L-aspartate to fumarate and ammonia. This Bacillus subtilis (strain 168) protein is Aspartate ammonia-lyase.